Consider the following 124-residue polypeptide: UPF0235 protein (124 aa).

A disordered region spans residues 1 to 22 (MTKKGSSNSSKQQQQQQQIIIN).

Belongs to the UPF0235 family.

In Dictyostelium discoideum (Social amoeba), this protein is UPF0235 protein.